The following is a 414-amino-acid chain: Serine/threonine transporter SstT (414 aa).

A run of 8 helical transmembrane segments spans residues 22 to 42, 54 to 74, 89 to 109, 148 to 168, 189 to 209, 223 to 243, 305 to 325, and 337 to 357; these read GLVL…TIGF, IFVK…VMAA, IIVL…IAGF, AIFK…GLAL, IVHV…AETL, LLAV…PILV, MAGA…TLGL, and IVAA…LLLI.

Belongs to the dicarboxylate/amino acid:cation symporter (DAACS) (TC 2.A.23) family.

Its subcellular location is the cell inner membrane. It carries out the reaction L-serine(in) + Na(+)(in) = L-serine(out) + Na(+)(out). The enzyme catalyses L-threonine(in) + Na(+)(in) = L-threonine(out) + Na(+)(out). In terms of biological role, involved in the import of serine and threonine into the cell, with the concomitant import of sodium (symport system). The polypeptide is Serine/threonine transporter SstT (Haemophilus influenzae (strain PittGG)).